Consider the following 79-residue polypeptide: Acyl carrier protein (79 aa).

Positions 1–76 constitute a Carrier domain; it reads MSLEDDVIAI…DVFTYIKKRQ (76 aa). Ser36 carries the O-(pantetheine 4'-phosphoryl)serine modification.

The protein belongs to the acyl carrier protein (ACP) family. In terms of processing, 4'-phosphopantetheine is transferred from CoA to a specific serine of apo-ACP by AcpS. This modification is essential for activity because fatty acids are bound in thioester linkage to the sulfhydryl of the prosthetic group.

It localises to the cytoplasm. It functions in the pathway lipid metabolism; fatty acid biosynthesis. In terms of biological role, carrier of the growing fatty acid chain in fatty acid biosynthesis. This is Acyl carrier protein from Chlamydia pneumoniae (Chlamydophila pneumoniae).